Reading from the N-terminus, the 225-residue chain is Probable GTP-binding protein EngB (225 aa).

Residues 31–204 enclose the EngB-type G domain; it reads VGVEIAFAGR…LGILDSWCKP (174 aa). GTP contacts are provided by residues 39–46, 65–69, 83–86, 150–153, and 183–185; these read GRSNAGKS, GRTQL, DLPG, TKAD, and FSS. Ser46 and Thr67 together coordinate Mg(2+).

It belongs to the TRAFAC class TrmE-Era-EngA-EngB-Septin-like GTPase superfamily. EngB GTPase family. Requires Mg(2+) as cofactor.

In terms of biological role, necessary for normal cell division and for the maintenance of normal septation. The protein is Probable GTP-binding protein EngB of Shewanella pealeana (strain ATCC 700345 / ANG-SQ1).